A 189-amino-acid chain; its full sequence is MKKYSKKDRQMKLQVAIEENPFITDEQLAEKFGVSVQTIRLDRVALSIPELRERIKHVASVTYADAVKSLPIDEVIGEIIDIQLSKSAISIFDVRSEHVFKRNKIARGHHLFAQANSLATAVIPNEIALTTQATVRFVRSVNEGERIIAKAKVRPATDNRAITIVDVKSYVGDEIVLKGKFEMYHATQK.

Belongs to the FapR family.

Transcriptional factor involved in regulation of membrane lipid biosynthesis by repressing genes involved in fatty acid and phospholipid metabolism. In Listeria monocytogenes serotype 4a (strain HCC23), this protein is Transcription factor FapR.